Here is a 537-residue protein sequence, read N- to C-terminus: Sodium/hydrogen exchanger 9B2 (537 aa).

A compositionally biased stretch (basic and acidic residues) spans 1-10 (MGDEDKRITY). Residues 1 to 28 (MGDEDKRITYEDSEPSTGMNYTPSMHQE) form a disordered region. The Cytoplasmic segment spans residues 1–86 (MGDEDKRITY…ACPPHGLLDR (86 aa)). Over residues 15-27 (PSTGMNYTPSMHQ) the composition is skewed to polar residues. Serine 49 carries the phosphoserine modification. A helical transmembrane segment spans residues 87 to 104 (VITNVTIIVLLWAVVWSI). The Extracellular segment spans residues 105-113 (TGSECLPGG). A helical membrane pass occupies residues 114–133 (NLFGIIILFYCAIIGGKLLG). The Cytoplasmic segment spans residues 134 to 144 (LIKLPTLPPLP). A helical transmembrane segment spans residues 145–161 (SLLGMLLAGFLIRNIPV). The Extracellular segment spans residues 162 to 171 (INDNVQIKHK). The chain crosses the membrane as a helical span at residues 172–189 (WSSSLRSIALSIILVRAG). Over 190–200 (LGLDSKALKKL) the chain is Cytoplasmic. Residues 201–227 (KGVCVRLSMGPCIVEACTSALLAHYLL) traverse the membrane as a helical segment. Residues 228 to 233 (GLPWQW) are Extracellular-facing. The helical transmembrane segment at 234–242 (GFILGFVLG) threads the bilayer. Residues 243–270 (AVSPAVVVPSMLLLQGGGYGVEKGVPTL) lie on the Cytoplasmic side of the membrane. 4 residues coordinate Na(+): valine 244, glycine 275, aspartate 278, and aspartate 279. A helical membrane pass occupies residues 271–290 (LMAAGSFDDILAITGFNTCL). The Extracellular segment spans residues 291–300 (GIAFSTGSTV). The chain crosses the membrane as a helical span at residues 301 to 324 (FNVLRGVLEVVIGVATGSVLGFFI). Topologically, residues 325–339 (QYFPSRDQDKLVCKR) are cytoplasmic. A helical membrane pass occupies residues 340-357 (TFLVLGLSVLAVFSSVHF). The Extracellular segment spans residues 358–361 (GFPG). The helical transmembrane segment at 362 to 373 (SGGLCTLVMAFL) threads the bilayer. Over 374–390 (AGMGWTSEKAEVEKIIA) the chain is Cytoplasmic. Residues 391-411 (VAWDIFQPLLFGLIGAEVSIA) traverse the membrane as a helical segment. Over 412-417 (SLRPET) the chain is Extracellular. The helical transmembrane segment at 418–440 (VGLCVATVGIAVLIRILTTFLMV) threads the bilayer. Residues 441-461 (CFAGFNLKEKIFISFAWLPKA) lie on the Cytoplasmic side of the membrane. Residues 462–473 (TVQAAIGSVALD) traverse the membrane as a helical segment. Residues 474-486 (TARSHGEKQLEDY) are Extracellular-facing. The chain crosses the membrane as a helical span at residues 487-509 (GMDVLTVAFLSILITAPIGSLLI). Over 510–537 (GLLGPRLLQKVEHQNKDEEVQGETSVQV) the chain is Cytoplasmic.

The protein belongs to the monovalent cation:proton antiporter 1 (CPA1) transporter (TC 2.A.36) family. As to quaternary structure, homodimer. Dimerization is essential for SLC9B2 activity. Lipids seem to play a role in the stabilization of the dimerization subdomain. In terms of tissue distribution, widely expressed. High levels detected in the distal tubules of the kidney nephron. Detected in red blood cells (at protein level).

The protein localises to the cell membrane. It is found in the mitochondrion membrane. Its subcellular location is the endosome membrane. The protein resides in the recycling endosome membrane. It localises to the cytoplasmic vesicle. The protein localises to the secretory vesicle. It is found in the synaptic vesicle membrane. Its subcellular location is the cell projection. The protein resides in the cilium. It localises to the flagellum membrane. The protein localises to the basolateral cell membrane. It is found in the apical cell membrane. It catalyses the reaction Li(+)(out) + H(+)(in) = Li(+)(in) + H(+)(out). The catalysed reaction is Li(+)(in) + Na(+)(out) = Li(+)(out) + Na(+)(in). It carries out the reaction Na(+)(in) + H(+)(out) = Na(+)(out) + H(+)(in). Its activity is regulated as follows. Allosterically inhibited by the N-terminal domain. Inhibited by phloretin. Its function is as follows. Electroneutral Na(+) Li(+)/H(+) antiporter that extrudes Na(+) or Li(+) in exchange for external protons across the membrane. Uses the proton gradient/membrane potential to extrude sodium. Contributes to the regulation of intracellular pH and sodium homeostasis. Also able to mediate Na(+)/Li(+) antiporter activity in kidney. May play a physiological role in renal tubular function and blood pressure homeostasis. Plays an important role for insulin secretion and clathrin-mediated endocytosis in beta-cells. Involved in sperm motility and fertility. It is controversial whether SLC9B2 plays a role in osteoclast differentiation or not. This is Sodium/hydrogen exchanger 9B2 from Homo sapiens (Human).